The sequence spans 537 residues: Cytochrome bd ubiquinol oxidase subunit 1 (537 aa).

Over 1–24 (MISESVVDLSRLQFAMTALYHFLF) the chain is Cytoplasmic. Position 21 (His-21) interacts with heme b. The chain crosses the membrane as a helical span at residues 25-44 (VPLTLGMTFLLAIMESVYVM). Topologically, residues 45–96 (TGKQVYKDMVKFWGKLFGINFALGVTTGITMEFQFGTNWAYYSHYVGDIFGA) are periplasmic. Residues 97-116 (PLAIEGLTAFFLESTFIGMF) traverse the membrane as a helical segment. The Cytoplasmic portion of the chain corresponds to 117–131 (FFGWDRLSKIQHLAV). Residues 132 to 151 (TWLVALGSNLSALWILVANG) traverse the membrane as a helical segment. Residues 152–189 (WMQHPVGAEFNFETMRMELVDFGALLLNPVAQVKFVHT) lie on the Periplasmic side of the membrane. His-188 is a heme b binding site. The helical transmembrane segment at 190–209 (VASGYVTGAVFVLAISSYYL) threads the bilayer. Residues 210–221 (LKKRDLGFARRS) lie on the Cytoplasmic side of the membrane. Residues 222–241 (FAIASAFGMASILSVIVLGD) form a helical membrane-spanning segment. The Periplasmic portion of the chain corresponds to 242–394 (ESGYEVGEVQ…VASMFWSFRA (153 aa)). Met-395 is a binding site for heme b. The helical transmembrane segment at 395–414 (MVGAGFAMLILFVCAFWASA) threads the bilayer. Topologically, residues 415–472 (RKNEESKPWLLKFALYSLPLPWIATQTGWFVAEHGRQPWTIGGVLPTHLSASSLSTGD) are cytoplasmic. A helical transmembrane segment spans residues 473-492 (LWGSLIALIAFYTLLLVVEM). At 493 to 537 (YLMIRFARLGPSSLHTGRYHFEQLEQHAVKHASPSQADPQQPVNA) the chain is on the periplasmic side.

The protein belongs to the cytochrome ubiquinol oxidase subunit 1 family. As to quaternary structure, heterodimer of subunits I and II. Requires heme b as cofactor. Heme d cis-diol serves as cofactor.

It is found in the cell inner membrane. It catalyses the reaction 2 a ubiquinol + O2(in) + 4 H(+)(in) = 2 a ubiquinone + 2 H2O(in) + 4 H(+)(out). Functionally, may be involved in maintaining the low intracellular oxygen concentration required for nitrogen fixation. This is Cytochrome bd ubiquinol oxidase subunit 1 (cydA) from Azotobacter vinelandii.